A 670-amino-acid polypeptide reads, in one-letter code: Solute carrier organic anion transporter family member 1A2 (670 aa).

The Cytoplasmic segment spans residues 1–20 (MGETEKRIETHRIRCLSKLK). A helical transmembrane segment spans residues 21–40 (MFLLAITCAFVSKTLSGSYM). Topologically, residues 41–59 (NSMLTQIERQFNIPTSLVG) are extracellular. Residues 60–80 (FINGSFEIGNLLLIIFVSYFG) traverse the membrane as a helical segment. The Cytoplasmic portion of the chain corresponds to 81 to 86 (TKLHRP). A helical transmembrane segment spans residues 87 to 111 (IMIGIGCVVMGLGCFLKSLPHFLMN). Over 112 to 155 (QYEYESTVSVSGNLSSNSFLCMENGTQILRPTQDPSECTKEVKS) the chain is Extracellular. N-linked (GlcNAc...) asparagine glycosylation is found at Asn-124 and Asn-135. A helical transmembrane segment spans residues 156–184 (LMWVYVLVGNIVRGMGETPILPLGISYIE). At 185 to 203 (DFAKFENSPLYIGLVETGA) the chain is on the cytoplasmic side. Residues 204–224 (IIGPLIGLLLASFCANVYVDT) form a helical membrane-spanning segment. Over 225-242 (GFVNTDDLIITPTDTRWV) the chain is Extracellular. A helical transmembrane segment spans residues 243–267 (GAWWFGFLICAGVNVLTAIPFFFLP). At 268 to 311 (NTLPKEGLETNADIIKNENEDKQKEEVKKEKYGITKDFLPFMKS) the chain is on the cytoplasmic side. A helical transmembrane segment spans residues 312 to 333 (LSCNPIYMLFILVSVIQFNAFV). Residues 334–353 (NMISFMPKYLEQQYGISSSD) lie on the Extracellular side of the membrane. The helical transmembrane segment at 354-377 (AIFLMGIYNLPPICIGYIIGGLIM) threads the bilayer. Over 378–381 (KKFK) the chain is Cytoplasmic. A helical membrane pass occupies residues 382-405 (ITVKQAAHIGCWLSLLEYLLYFLS). The Extracellular segment spans residues 406–513 (FLMTCENSSV…PDCSLMLQYF (108 aa)). 2 N-linked (GlcNAc...) asparagine glycosylation sites follow: Asn-412 and Asn-419. The Kazal-like domain maps to 433-488 (NDIFADCNVDCNCPSKIWDPVCGNNGLSYLSACLAGCETSIGTGINMVFQNCSCIQ). 3 disulfide bridges follow: Cys-439-Cys-469, Cys-445-Cys-465, and Cys-454-Cys-486. The chain crosses the membrane as a helical span at residues 514-536 (LILSAMSSFIYSLAAIPGYMVLL). The Cytoplasmic segment spans residues 537–545 (RCMKSEEKS). The chain crosses the membrane as a helical span at residues 546-571 (LGVGLHTFCTRVFAGIPAPIYFGALM). At 572–605 (DSTCLHWGTLKCGESGACRIYDSTTFRYIYLGLP) the chain is on the extracellular side. A helical membrane pass occupies residues 606–623 (AALRGSSFVPALIILILL). Over 624-670 (RKCHLPGENASSGTELIETKVKGKENECKDIYQKSTVLKDDELKTKL) the chain is Cytoplasmic.

Belongs to the organo anion transporter (TC 2.A.60) family. Higher expression in the brain than in liver and kidney. Expressed in brain neurons in both cortex and hippocampus. Expressed in placental trophoblasts. Also expressed in lung and testes at lower levels. Expressed in the eye (at protein level). Expressed in the retina in the outer and inner nuclear layers, the inner plexiform layer and the ganglion cell layer. Expressed in liver and prostate. In testis, primarily localized to the basal membrane of Sertoli cells and weakly expressed in Leydig cells and within the tubules. Expressed in fetal brain and liver.

The protein localises to the cell membrane. The protein resides in the basal cell membrane. The enzyme catalyses taurocholate(out) = taurocholate(in). It catalyses the reaction glycocholate(out) = glycocholate(in). It carries out the reaction taurochenodeoxycholate(out) = taurochenodeoxycholate(in). The catalysed reaction is tauroursodeoxycholate(out) = tauroursodeoxycholate(in). The enzyme catalyses dehydroepiandrosterone 3-sulfate(out) = dehydroepiandrosterone 3-sulfate(in). It catalyses the reaction estrone 3-sulfate(out) = estrone 3-sulfate(in). It carries out the reaction 3,3',5'-triiodo-L-thyronine(out) = 3,3',5'-triiodo-L-thyronine(in). The catalysed reaction is L-thyroxine(out) = L-thyroxine(in). The enzyme catalyses taurodeoxycholate(out) = taurodeoxycholate(in). It catalyses the reaction glycodeoxycholate(out) = glycodeoxycholate(in). It carries out the reaction glycochenodeoxycholate(out) = glycochenodeoxycholate(in). The catalysed reaction is glycoursodeoxycholate(out) = glycoursodeoxycholate(in). The enzyme catalyses 17beta-estradiol 17-O-(beta-D-glucuronate)(out) = 17beta-estradiol 17-O-(beta-D-glucuronate)(in). It catalyses the reaction prostaglandin E2(out) = prostaglandin E2(in). It carries out the reaction substance P(out) = substance P(in). Transport activity is inhibited by the grapefruit juice component naringin. In terms of biological role, na(+)-independent transporter that mediates the cellular uptake of a broad range of organic anions such as the endogenous bile salts cholate and deoxycholate, either in their unconjugated or conjugated forms (taurocholate and glycocholate), at the plasmam membrane. Responsible for intestinal absorption of bile acids. Transports dehydroepiandrosterone 3-sulfate (DHEAS), a major circulating steroid secreted by the adrenal cortex, as well as estrone 3-sulfate and 17beta-estradiol 17-O-(beta-D-glucuronate). Mediates apical uptake of all-trans-retinol (atROL) across human retinal pigment epithelium, which is essential to maintaining the integrity of the visual cycle and thus vision. Involved in the uptake of clinically used drugs. Capable of thyroid hormone transport (both T3 or 3,3',5'-triiodo-L-thyronine, and T4 or L-tyroxine). Also transports prostaglandin E2. Plays roles in blood-brain and -cerebrospinal fluid barrier transport of organic anions and signal mediators, and in hormone uptake by neural cells. May also play a role in the reuptake of neuropeptides such as substance P/TAC1 and vasoactive intestinal peptide/VIP released from retinal neurons. May play an important role in plasma and tissue distribution of the structurally diverse chemotherapeutic drugs methotrexate and paclitaxel. Shows a pH-sensitive substrate specificity which may be ascribed to the protonation state of the binding site and leads to a stimulation of substrate transport in an acidic microenvironment. Hydrogencarbonate/HCO3(-) acts as the probable counteranion that exchanges for organic anions. May contribute to regulate the transport of organic compounds in testis across the blood-testis-barrier. The polypeptide is Solute carrier organic anion transporter family member 1A2 (SLCO1A2) (Homo sapiens (Human)).